A 222-amino-acid polypeptide reads, in one-letter code: 3-demethoxyubiquinol 3-hydroxylase (222 aa).

Positions 71, 101, 104, 153, 185, and 188 each coordinate Fe cation.

The protein belongs to the COQ7 family. It depends on Fe cation as a cofactor.

Its subcellular location is the cell membrane. It catalyses the reaction a 5-methoxy-2-methyl-3-(all-trans-polyprenyl)benzene-1,4-diol + AH2 + O2 = a 3-demethylubiquinol + A + H2O. It participates in cofactor biosynthesis; ubiquinone biosynthesis. Its function is as follows. Catalyzes the hydroxylation of 2-nonaprenyl-3-methyl-6-methoxy-1,4-benzoquinol during ubiquinone biosynthesis. The protein is 3-demethoxyubiquinol 3-hydroxylase of Bordetella bronchiseptica (strain ATCC BAA-588 / NCTC 13252 / RB50) (Alcaligenes bronchisepticus).